A 100-amino-acid polypeptide reads, in one-letter code: Large ribosomal subunit protein uL23 (100 aa).

The protein belongs to the universal ribosomal protein uL23 family. As to quaternary structure, part of the 50S ribosomal subunit. Contacts protein L29, and trigger factor when it is bound to the ribosome.

Functionally, one of the early assembly proteins it binds 23S rRNA. One of the proteins that surrounds the polypeptide exit tunnel on the outside of the ribosome. Forms the main docking site for trigger factor binding to the ribosome. This Synechococcus sp. (strain CC9605) protein is Large ribosomal subunit protein uL23.